Reading from the N-terminus, the 431-residue chain is Ribosome assembly protein SQT1 (431 aa).

6 WD repeats span residues 63–102, 107–146, 149–192, 199–243, 309–348, and 350–387; these read KHTDSVFAIGHHPNLPLVCTGGGDNLAHLWTSHSQPPKFA, GYGESVISCSFTSEGGFLVTADMSGKVLVHMGQKGGAQWK, SQMQ…GSLE, VHQQ…QLFK, ELDASIESISWSSKFSLMAIGLVCGEILLYDTSAWRVRHK, and VLEDSVTKLMFDNDDLFASCINGKVYQFNARTGQEKFV.

Interacts strongly with QSR1. Part of an oligomeric protein complex that is loosely associated with ribosomes.

In terms of biological role, may be involved in the late step of 60S ribosomal subunit assembly or modification in the cytoplasm. The protein is Ribosome assembly protein SQT1 (SQT1) of Saccharomyces cerevisiae (strain ATCC 204508 / S288c) (Baker's yeast).